The following is a 146-amino-acid chain: UPF0178 protein OB0454 (146 aa).

Belongs to the UPF0178 family.

This Oceanobacillus iheyensis (strain DSM 14371 / CIP 107618 / JCM 11309 / KCTC 3954 / HTE831) protein is UPF0178 protein OB0454.